The chain runs to 432 residues: Competence protein ComFA (432 aa).

Residues C40, C43, C60, and C63 each contribute to the Zn(2+) site. The region spanning 107–257 is the Helicase ATP-binding domain; that stretch reads LQAVDKQKPT…RLGELKRLNL (151 aa). 120–127 provides a ligand contact to ATP; that stretch reads AVTGAGKT. Positions 205 to 208 match the DEAD box motif; the sequence is DEVD. In terms of domain architecture, Helicase C-terminal spans 289-432; it reads KLKSYIEKQR…IQMMNKEAGL (144 aa).

The protein belongs to the DEAD box helicase family. Monomer and dimer in solution. Interacts with DprA and ComFC; ComFA-ComFC form rings about 150 Angstroms in diameter with apparent 6-fold symmetry. Zn(2+) serves as cofactor.

It localises to the cytoplasm. Functionally, involved in transformation (genetic competence for DNA uptake). DNA uptake is energy dependent, this protein may provide the driving force for DNA uptake. Does not have helicase activity, translocates on single-stranded (ss)DNA in a 5'-3' direction in an ATP-dependent manner, but does not unwind double-stranded (ds)DNA (tested with 5'- and 3'-overhang dsDNA). ATP hydrolysis causes the release of ssDNA from ComFA. A ssDNA-stimulated ATPase; dsDNA does not stimulate ATPase. ATP hydrolysis causes the release of ssDNA from ComFA. ComFC has no effect on ATPase activity. Binds ssDNA but only very poorly to dsDNA in the absence of ATP. Binding to ssDNA does not require free DNA ends. In Streptococcus pneumoniae (strain ATCC BAA-255 / R6), this protein is Competence protein ComFA.